Consider the following 197-residue polypeptide: Small ribosomal subunit protein uS4c (197 aa).

The S4 RNA-binding domain occupies 92 to 153; it reads MRLDAVVYRL…APIVEHAKTF (62 aa).

It belongs to the universal ribosomal protein uS4 family. Part of the 30S ribosomal subunit. Contacts protein S5. The interaction surface between S4 and S5 is involved in control of translational fidelity.

It is found in the plastid. The protein resides in the chloroplast. In terms of biological role, one of the primary rRNA binding proteins, it binds directly to 16S rRNA where it nucleates assembly of the body of the 30S subunit. Functionally, with S5 and S12 plays an important role in translational accuracy. The protein is Small ribosomal subunit protein uS4c (rps4) of Ostreococcus tauri.